Consider the following 276-residue polypeptide: Phosducin-like protein 1 (276 aa).

Residues Ser-18, Ser-19, Ser-20, and Ser-42 each carry the phosphoserine modification. Positions 18 to 74 (SSSEGEDNGDEGGDNKGASGKSRCSGLTIDTNPDATPAGGFRQQSSTNTGPKGVVKD) are disordered. In terms of domain architecture, Phosducin spans 62 to 272 (SSTNTGPKGV…LIEHGIIVDR (211 aa)). A thioredoxin fold region spans residues 153-276 (FGQVQQLTSH…GIIVDRALYN (124 aa)).

It belongs to the phosducin family. As to quaternary structure, forms a complex with the beta and gamma subunits of the GTP-binding proteins. Interacts with the CCT chaperonin complex.

Its function is as follows. Functions as a co-chaperone for CCT in the assembly of heterotrimeric G protein complexes, facilitates the assembly of both Gbeta-Ggamma and RGS-Gbeta5 heterodimers. The polypeptide is Phosducin-like protein 1 (Drosophila melanogaster (Fruit fly)).